A 505-amino-acid polypeptide reads, in one-letter code: Lysine--tRNA ligase (505 aa).

Positions 403 and 410 each coordinate Mg(2+).

It belongs to the class-II aminoacyl-tRNA synthetase family. Homodimer. The cofactor is Mg(2+).

It is found in the cytoplasm. It carries out the reaction tRNA(Lys) + L-lysine + ATP = L-lysyl-tRNA(Lys) + AMP + diphosphate. The protein is Lysine--tRNA ligase of Methanospirillum hungatei JF-1 (strain ATCC 27890 / DSM 864 / NBRC 100397 / JF-1).